The chain runs to 293 residues: uncharacterized protein (293 aa).

2 disordered regions span residues 20-148 (ELHS…NNNT) and 226-283 (RENQ…GNKN). Acidic residues-rich tracts occupy residues 37 to 47 (LEDDEEYDDDQ), 56 to 91 (EEFD…DDEM), and 99 to 112 (NIDD…EEEQ). Low complexity-rich tracts occupy residues 117–148 (TNNN…NNNT) and 232–283 (NSNS…GNKN).

This is an uncharacterized protein from Dictyostelium discoideum (Social amoeba).